Consider the following 190-residue polypeptide: Interferon alpha-9 (190 aa).

The first 23 residues, 1-23 (MARPFAFLMVLVVISYWSTCSLG), serve as a signal peptide directing secretion. Disulfide bonds link cysteine 24–cysteine 122 and cysteine 52–cysteine 162. A glycan (N-linked (GlcNAc...) asparagine) is linked at asparagine 101.

Belongs to the alpha/beta interferon family.

Its subcellular location is the secreted. Its function is as follows. Produced by macrophages, IFN-alpha have antiviral activities. Interferon stimulates the production of two enzymes: a protein kinase and an oligoadenylate synthetase. This Mus musculus (Mouse) protein is Interferon alpha-9 (Ifna9).